Here is a 360-residue protein sequence, read N- to C-terminus: Archaemetzincin-2 (360 aa).

Position 254 (H254) interacts with Zn(2+). E255 acts as the Proton acceptor in catalysis. Zn(2+) is bound by residues H258, H264, C265, C270, C289, and C292.

It belongs to the peptidase M54 family. It depends on Zn(2+) as a cofactor.

Functionally, probable zinc metalloprotease. The chain is Archaemetzincin-2 (AMZ2) from Macaca fascicularis (Crab-eating macaque).